Here is a 241-residue protein sequence, read N- to C-terminus: MKLNQNTMLVGKKVVLVPYTSEHVPRYHEWMKSEELRHLTASEQLTLQQEYEMQCSWCEDEDKCTFIVLDAEKWQAQPRPPEESCMVGDVNLFLTDLEDPTLGEIEVMIAEPSYRRQGLGTEASLLIMSYGVTKLGLTKFEAKIGQENEPSIRMFQKLHFKQVAMSNVFQEVTLRLAVSEPERKWILEQTSHMEERPYRTRKAEPVTATLSEQKSWNCPLPRPDGCMGDTSAVSSVCARLS.

Residues 34-181 (EELRHLTASE…VTLRLAVSEP (148 aa)) enclose the N-acetyltransferase domain.

Belongs to the acetyltransferase family. GNAT subfamily.

It catalyses the reaction N-terminal L-methionyl-[tubulin] + acetyl-CoA = N-terminal N(alpha)-acetyl-L-methionyl-[tubulin] + CoA + H(+). N-acetyltransferase that mediates the acetylation of the N-terminal residues of alpha- and beta-tubulin. The chain is Alpha/beta-tubulin-N-acetyltransferase 9 (Nat9) from Mus musculus (Mouse).